Consider the following 297-residue polypeptide: UDP-N-acetylglucosamine transporter TMEM241 (297 aa).

A run of 10 helical transmembrane segments spans residues Leu7–Val29, Phe32–Met52, Val69–Ala89, Leu93–Gln113, Thr121–Phe141, Phe146–Ile166, Ile187–Leu207, Phe211–Leu231, Trp250–Leu270, and Thr271–Ser291.

The protein belongs to the nucleotide-sugar transporter family. SLC35A subfamily. As to expression, widely expressed with high expression in lung.

It localises to the golgi apparatus. It is found in the cis-Golgi network membrane. Its function is as follows. Golgi-localized UDP-N-acetylglucosamine (UDP-GlcNAc) transporter that transports UDP-N-acetylglucosamine into Golgi lumen. Contributes to lysosomal targeting of NPC2, a key protein required for lysosomal cholesterol exiting, and that utilizes the mannose-6-phosphate (M6P) modification pathway for its lysosomal targeting. The polypeptide is UDP-N-acetylglucosamine transporter TMEM241 (Tmem241) (Mus musculus (Mouse)).